A 116-amino-acid chain; its full sequence is Large ribosomal subunit protein uL18 (116 aa).

This sequence belongs to the universal ribosomal protein uL18 family. In terms of assembly, part of the 50S ribosomal subunit; part of the 5S rRNA/L5/L18/L25 subcomplex. Contacts the 5S and 23S rRNAs.

This is one of the proteins that bind and probably mediate the attachment of the 5S RNA into the large ribosomal subunit, where it forms part of the central protuberance. The protein is Large ribosomal subunit protein uL18 of Pseudomonas fluorescens (strain SBW25).